A 362-amino-acid polypeptide reads, in one-letter code: Methylthioribose-1-phosphate isomerase (362 aa).

D252 acts as the Proton donor in catalysis.

It belongs to the eIF-2B alpha/beta/delta subunits family. MtnA subfamily.

The protein localises to the cytoplasm. The protein resides in the nucleus. The catalysed reaction is 5-(methylsulfanyl)-alpha-D-ribose 1-phosphate = 5-(methylsulfanyl)-D-ribulose 1-phosphate. It functions in the pathway amino-acid biosynthesis; L-methionine biosynthesis via salvage pathway; L-methionine from S-methyl-5-thio-alpha-D-ribose 1-phosphate: step 1/6. Catalyzes the interconversion of methylthioribose-1-phosphate (MTR-1-P) into methylthioribulose-1-phosphate (MTRu-1-P). In Drosophila pseudoobscura pseudoobscura (Fruit fly), this protein is Methylthioribose-1-phosphate isomerase.